Here is a 141-residue protein sequence, read N- to C-terminus: Large ribosomal subunit protein uL11 (141 aa).

The protein belongs to the universal ribosomal protein uL11 family. As to quaternary structure, part of the ribosomal stalk of the 50S ribosomal subunit. Interacts with L10 and the large rRNA to form the base of the stalk. L10 forms an elongated spine to which L12 dimers bind in a sequential fashion forming a multimeric L10(L12)X complex. Post-translationally, one or more lysine residues are methylated.

Functionally, forms part of the ribosomal stalk which helps the ribosome interact with GTP-bound translation factors. The protein is Large ribosomal subunit protein uL11 of Ruminiclostridium cellulolyticum (strain ATCC 35319 / DSM 5812 / JCM 6584 / H10) (Clostridium cellulolyticum).